An 86-amino-acid polypeptide reads, in one-letter code: Anti-adapter protein IraP (86 aa).

A coiled-coil region spans residues 1 to 36; the sequence is MKNLIAELLFKLAQKEEESKELCAQVEALEIIVTAM.

This sequence belongs to the IraP family. As to quaternary structure, interacts with RssB.

It localises to the cytoplasm. Functionally, inhibits RpoS proteolysis by regulating RssB activity, thereby increasing the stability of the sigma stress factor RpoS especially during phosphate starvation, but also in stationary phase and during nitrogen starvation. Its effect on RpoS stability is due to its interaction with RssB, which probably blocks the interaction of RssB with RpoS, and the consequent delivery of the RssB-RpoS complex to the ClpXP protein degradation pathway. The protein is Anti-adapter protein IraP of Escherichia coli O127:H6 (strain E2348/69 / EPEC).